The primary structure comprises 259 residues: MSEVNLSGMTALSIGRGVTLNNASELEAALRHIGATRYHNHHPFHKLLHSGKLNKGQVQAWALNRYYYQSTIPLKDAMVMTRFRDRATRLEWRHRIEDHDGDVGTEGGIERWIKLTEGLGLDTAYVESTEGILPATRFAVEAYVHFCRDRSPLEAIASSLTELFAPSIHEERISGMLEHYSFVNNDTMSYFKRRLTQAPRDANFALHYVREHATTPEQRAAVCNALIFKTNVLWVQLDALYHAYVEGHIPPGAFVPKEG.

Belongs to the PqqC family.

It catalyses the reaction 6-(2-amino-2-carboxyethyl)-7,8-dioxo-1,2,3,4,7,8-hexahydroquinoline-2,4-dicarboxylate + 3 O2 = pyrroloquinoline quinone + 2 H2O2 + 2 H2O + H(+). It functions in the pathway cofactor biosynthesis; pyrroloquinoline quinone biosynthesis. Its function is as follows. Ring cyclization and eight-electron oxidation of 3a-(2-amino-2-carboxyethyl)-4,5-dioxo-4,5,6,7,8,9-hexahydroquinoline-7,9-dicarboxylic-acid to PQQ. The sequence is that of Pyrroloquinoline-quinone synthase from Bradyrhizobium sp. (strain ORS 278).